Here is a 1377-residue protein sequence, read N- to C-terminus: Zinc finger MYM-type protein 2 (1377 aa).

Glycyl lysine isopeptide (Lys-Gly) (interchain with G-Cter in SUMO2) cross-links involve residues Lys48, Lys88, Lys98, and Lys104. Polar residues-rich tracts occupy residues 85–115 (TSSK…SVSE) and 127–138 (TNQGQEKNSSNF). Residues 85-177 (TSSKNEELQG…GMGNSGITTE (93 aa)) are disordered. A compositionally biased stretch (basic and acidic residues) spans 139–152 (IERRPPETKNRTND). Lys147 is covalently cross-linked (Glycyl lysine isopeptide (Lys-Gly) (interchain with G-Cter in SUMO2)). The span at 153 to 164 (VDFSTSSFSRSK) shows a compositional bias: polar residues. Phosphoserine is present on Ser159. Residues Lys253 and Lys297 each participate in a glycyl lysine isopeptide (Lys-Gly) (interchain with G-Cter in SUMO2) cross-link. The disordered stretch occupies residues 273-305 (NGESATHHNPDSWISQSASFPRNQKQPGVDSLS). Over residues 284 to 298 (SWISQSASFPRNQKQ) the composition is skewed to polar residues. Ser305 carries the post-translational modification Phosphoserine. Glycyl lysine isopeptide (Lys-Gly) (interchain with G-Cter in SUMO2) cross-links involve residues Lys312, Lys325, Lys348, and Lys366. Residues 327 to 363 (VKVTCANCKKPLQKGQTAYQRKGSAHLFCSTTCLSSF) form an MYM-type 1 zinc finger. The MYM-type 2 zinc-finger motif lies at 369-409 (PKKLCVMCKKDITTMKGTIVAQVDSSESFQEFCSTSCLSLY). Residues Lys417, Lys441, Lys491, Lys503, Lys513, Lys529, and Lys532 each participate in a glycyl lysine isopeptide (Lys-Gly) (interchain with G-Cter in SUMO2) cross-link. 2 MYM-type zinc fingers span residues 421-456 (NKSR…FNRY) and 463-502 (IMNC…VSEY). The MYM-type 5 zinc-finger motif lies at 533–570 (LTTCTGCRTQCRFFDMTQCIGPNGYMEPYCSTACMNSH). Residues Lys576, Lys603, Lys649, Lys658, Lys688, Lys700, and Lys709 each participate in a glycyl lysine isopeptide (Lys-Gly) (interchain with G-Cter in SUMO2) cross-link. Residues 636–671 (QLKCNYCKNSFCSKPEILEWENKVHQFCSKTCSDDY) form an MYM-type 6 zinc finger. 2 MYM-type zinc fingers span residues 723–758 (RCVT…CKKF) and 764–799 (KAAR…LLRF). Residues Lys764, Lys788, Lys812, and Lys829 each participate in a glycyl lysine isopeptide (Lys-Gly) (interchain with G-Cter in SUMO2) cross-link. 2 positions are modified to phosphoserine: Ser838 and Ser958. Disordered stretches follow at residues 983 to 1002 (LLKN…PYEP) and 1028 to 1064 (VFGE…SDNS). Over residues 1039–1050 (PRSKKKGAKRKA) the composition is skewed to basic residues. The residue at position 1064 (Ser1064) is a Phosphoserine. Phosphothreonine is present on Thr1376.

In terms of assembly, can form homodimers. May be a component of a BHC histone deacetylase complex that contains HDAC1, HDAC2, HMG20B/BRAF35, KDM1A, RCOR1/CoREST, PHF21A/BHC80, ZMYM2, ZNF217, ZMYM3, GSE1 and GTF2I. Interacts with FOXP1 and FOXP2.

The protein localises to the nucleus. Functionally, involved in the negative regulation of transcription. This is Zinc finger MYM-type protein 2 (ZMYM2) from Homo sapiens (Human).